A 336-amino-acid chain; its full sequence is Dihydroorotate dehydrogenase (quinone) (336 aa).

Residues 62-66 (AGLDK) and T86 contribute to the FMN site. K66 contacts substrate. Residue 111–115 (NRMGF) coordinates substrate. FMN is bound by residues N139 and N172. N172 is a substrate binding site. S175 serves as the catalytic Nucleophile. N177 serves as a coordination point for substrate. FMN-binding residues include K217 and T245. Residue 246-247 (NT) coordinates substrate. Residues G268, G297, and 318–319 (YS) each bind FMN.

It belongs to the dihydroorotate dehydrogenase family. Type 2 subfamily. Monomer. It depends on FMN as a cofactor.

It localises to the cell membrane. The enzyme catalyses (S)-dihydroorotate + a quinone = orotate + a quinol. The protein operates within pyrimidine metabolism; UMP biosynthesis via de novo pathway; orotate from (S)-dihydroorotate (quinone route): step 1/1. Catalyzes the conversion of dihydroorotate to orotate with quinone as electron acceptor. The protein is Dihydroorotate dehydrogenase (quinone) of Pectobacterium atrosepticum (strain SCRI 1043 / ATCC BAA-672) (Erwinia carotovora subsp. atroseptica).